A 178-amino-acid chain; its full sequence is ATP-dependent protease subunit HslV (178 aa).

Residue threonine 7 is part of the active site. Na(+) is bound by residues glycine 162, cysteine 165, and threonine 168.

The protein belongs to the peptidase T1B family. HslV subfamily. A double ring-shaped homohexamer of HslV is capped on each side by a ring-shaped HslU homohexamer. The assembly of the HslU/HslV complex is dependent on binding of ATP.

The protein localises to the cytoplasm. It catalyses the reaction ATP-dependent cleavage of peptide bonds with broad specificity.. Allosterically activated by HslU binding. In terms of biological role, protease subunit of a proteasome-like degradation complex believed to be a general protein degrading machinery. The chain is ATP-dependent protease subunit HslV from Burkholderia ambifaria (strain ATCC BAA-244 / DSM 16087 / CCUG 44356 / LMG 19182 / AMMD) (Burkholderia cepacia (strain AMMD)).